The sequence spans 2363 residues: Spectrin beta chain, non-erythrocytic 1 (2363 aa).

Thr-2 is subject to N-acetylthreonine. Residues 2-275 (TTTVATDYDN…IITYVVTYYH (274 aa)) are actin-binding. 2 positions are modified to phosphoserine: Ile-14 and Ser-36. Calponin-homology (CH) domains lie at 54–158 (AVQK…LRFQ) and 173–278 (KSAK…HYFS). Lys-90 bears the N6-acetyllysine mark. Ser-228 bears the Phosphoserine mark. Spectrin repeat units follow at residues 303–411 (MIEK…LALR), 423–525 (LARR…QRLE), 530–636 (LQKI…RLEE), 639–742 (RLWK…RLEE), 745–847 (LLHQ…ALQD), 850–952 (ALYK…DALL), 957–1060 (IQNY…SLGE), 1063–1166 (KLQQ…NLLS), 1170–1259 (AYQQ…RHRK), 1276–1376 (DLQK…AQRL), 1381–1482 (KAEL…HNLL), 1486–1590 (EIHQ…RLEE), 1592–1696 (HKAQ…KLDE), 1698–1801 (HRLF…TQIL), and 1805–1907 (YELH…RVRL). A phosphoserine mark is found at Ser-817, Ser-903, Ser-1057, Ser-1076, Ser-1079, and Ser-1237. A phosphoserine mark is found at Ser-1388, Ser-1447, and Ser-1557. Residues 1563 to 2093 (IRQRLADLKQ…LLEVRRQQEE (531 aa)) are interaction with ANK2. Tyr-1805 is modified (phosphotyrosine). N6-acetyllysine is present on residues Lys-1815, Lys-1913, and Lys-1989. Spectrin repeat units lie at residues 1914 to 2014 (FRFF…EWLR) and 2018 to 2097 (EVHQ…EERK). The interval 2089 to 2193 (RQQEEEERKR…AATLPARTLE (105 aa)) is disordered. A phosphoserine mark is found at Ser-2102, Ser-2127, and Ser-2137. Residues 2115–2130 (SQQWDTSKGDQVSQNG) show a composition bias toward polar residues. Thr-2146 bears the Phosphothreonine mark. Ser-2147 carries the phosphoserine modification. The mediates interaction with CAMSAP1 stretch occupies residues 2148–2176 (EMVNGAAEQRTSSKESSPVPSPTLDRKAK). Residue Thr-2158 is modified to Phosphothreonine. A phosphoserine mark is found at Ser-2159, Ser-2160, Ser-2163, Ser-2164, and Ser-2168. Residue Thr-2170 is modified to Phosphothreonine. Ser-2183 carries the phosphoserine modification. Thr-2186 and Thr-2194 each carry phosphothreonine. The PH domain occupies 2196-2306 (AAQMEGFLNR…WIQAISSAIS (111 aa)). The disordered stretch occupies residues 2308 to 2363 (DKHDTSASTQSTPASSRAQTLPTSVVTITSESSPGKREKDKEKDKEKRFSLFGKKK). Ser-2313 and Ser-2318 each carry phosphoserine. The segment covering 2313-2327 (SASTQSTPASSRAQT) has biased composition (low complexity). Thr-2319 is modified (phosphothreonine). O-linked (GlcNAc) serine glycosylation occurs at Ser-2323. Residue Thr-2327 is modified to Phosphothreonine. Residues 2328–2340 (LPTSVVTITSESS) show a composition bias toward polar residues. 2 positions are modified to phosphoserine: Ser-2339 and Ser-2340. The span at 2341–2356 (PGKREKDKEKDKEKRF) shows a compositional bias: basic and acidic residues.

It belongs to the spectrin family. As to quaternary structure, interacts with ANK2. Interacts with CPNE4 (via VWFA domain). Like erythrocyte spectrin, the spectrin-like proteins are capable to form dimers which can further associate to tetramers. Interacts with CAMSAP1. Can form heterodimers with SPTAN1. Isoform 2 is present in brain, heart, kidney and liver (at protein level).

The protein localises to the cytoplasm. Its subcellular location is the cytoskeleton. The protein resides in the endomembrane system. It is found in the myofibril. It localises to the sarcomere. The protein localises to the m line. Its subcellular location is the cytosol. The protein resides in the cell membrane. Fodrin, which seems to be involved in secretion, interacts with calmodulin in a calcium-dependent manner and is thus candidate for the calcium-dependent movement of the cytoskeleton at the membrane. Plays a critical role in central nervous system development and function. This Mus musculus (Mouse) protein is Spectrin beta chain, non-erythrocytic 1 (Sptbn1).